The primary structure comprises 312 residues: Phospho-N-acetylmuramoyl-pentapeptide-transferase (312 aa).

The next 9 helical transmembrane spans lie at 1–21, 48–68, 76–96, 115–135, 140–160, 165–185, 214–234, 238–258, and 289–309; these read MMVVAALLSWFLLGLFIHYSK, GVAFVLALLLVFVGLLAFGGI, EVMILLAALGMGVVGGIDDFL, FPLQVLVALLFAGFAAPLASH, GFMSIGGYPIFDMLFIAFVMV, AFNFTDGLDGLLAGVGMIVLL, VFMGDMGSHAIGAVAAGAYAL, VWLLPIAAIIPVAAVLSVVIQ, and VTLRFWVVTGIATALTWWLMG.

It belongs to the glycosyltransferase 4 family. MraY subfamily. Mg(2+) is required as a cofactor.

The protein resides in the cell membrane. The enzyme catalyses UDP-N-acetyl-alpha-D-muramoyl-L-alanyl-gamma-D-glutamyl-meso-2,6-diaminopimeloyl-D-alanyl-D-alanine + di-trans,octa-cis-undecaprenyl phosphate = di-trans,octa-cis-undecaprenyl diphospho-N-acetyl-alpha-D-muramoyl-L-alanyl-D-glutamyl-meso-2,6-diaminopimeloyl-D-alanyl-D-alanine + UMP. It participates in cell wall biogenesis; peptidoglycan biosynthesis. Functionally, catalyzes the initial step of the lipid cycle reactions in the biosynthesis of the cell wall peptidoglycan: transfers peptidoglycan precursor phospho-MurNAc-pentapeptide from UDP-MurNAc-pentapeptide onto the lipid carrier undecaprenyl phosphate, yielding undecaprenyl-pyrophosphoryl-MurNAc-pentapeptide, known as lipid I. This chain is Phospho-N-acetylmuramoyl-pentapeptide-transferase, found in Deinococcus radiodurans (strain ATCC 13939 / DSM 20539 / JCM 16871 / CCUG 27074 / LMG 4051 / NBRC 15346 / NCIMB 9279 / VKM B-1422 / R1).